The primary structure comprises 102 residues: MIPGEFKFGQGKILCNADKKAITIEVKNTGDRAVQVGSHYHFYEVNSALDFDRKLAWGKKLDIPSGAGVRFEPGDVKKVNLVDFTGERRIFGFHDEVNGYLD.

The protein belongs to the urease beta subunit family. As to quaternary structure, heterotrimer of UreA (gamma), UreB (beta) and UreC (alpha) subunits. Three heterotrimers associate to form the active enzyme.

Its subcellular location is the cytoplasm. The catalysed reaction is urea + 2 H2O + H(+) = hydrogencarbonate + 2 NH4(+). The protein operates within nitrogen metabolism; urea degradation; CO(2) and NH(3) from urea (urease route): step 1/1. The protein is Urease subunit beta of Clostridium perfringens.